Here is a 224-residue protein sequence, read N- to C-terminus: MAISDWPEAERPREKLIQKGATVLSDAELLAIFLRTGITGKSAVELARNLLTHFGSLTKLCAANLHEFSKLPGMGPAKFAQLQAVMEMARRALAEELKSGDIMDSPQSVRSYLRLSLGGKPHEVFVGIFLDARHRTIMIEELFRGTLTQASVYPREVVKRALYHNAAAMIFAHNHPSGVAEPSRADEMLTQSLKQALALVDVKVLDHFVIGNNETVSFAERGLI.

In terms of domain architecture, MPN spans 102-224 (IMDSPQSVRS…TVSFAERGLI (123 aa)). Zn(2+) contacts are provided by H173, H175, and D186. The JAMM motif signature appears at 173–186 (HNHPSGVAEPSRAD).

Belongs to the UPF0758 family.

The sequence is that of UPF0758 protein Neut_0782 from Nitrosomonas eutropha (strain DSM 101675 / C91 / Nm57).